The sequence spans 464 residues: Sensor histidine kinase Hik34 (464 aa).

Residues 235–449 enclose the Histidine kinase domain; sequence ALTHEVRTPL…ILTIYLKCEQ (215 aa). Residue H238 is modified to Phosphohistidine; by autocatalysis.

In terms of processing, when expressed in E.coli autophosphorylates at 18 to 30 degrees Celsius; less phosphorylation occurs at 36 and none occurs at 42 or 48 degrees Celsius.

It carries out the reaction ATP + protein L-histidine = ADP + protein N-phospho-L-histidine.. In terms of biological role, member of a two-component system Hik34/Rre1, controlling expression of at least 20 genes in response to hyperosmotic stress (0.5 M sorbitol) or salt (0.5 M NaCl). Represses expression of heat shock genes under normal growth conditions. Required for survival of long-term heat shock exposure. The polypeptide is Sensor histidine kinase Hik34 (Synechocystis sp. (strain ATCC 27184 / PCC 6803 / Kazusa)).